A 419-amino-acid polypeptide reads, in one-letter code: uncharacterized protein (419 aa).

7 consecutive transmembrane segments (helical) span residues 16-36 (IMAK…LVVT), 186-206 (LVYI…SMIA), 235-255 (LLGI…AGSL), 283-303 (VIYA…LAAF), 318-338 (ITPM…GLNA), 340-360 (DAGF…IMFL), and 369-389 (FWQA…LAVI).

It to M.jannaschii MJ1024.

The protein localises to the cell membrane. This is an uncharacterized protein from Bacillus subtilis (strain 168).